The primary structure comprises 450 residues: Keratin, type I cytoskeletal 25 (450 aa).

Residues 1 to 23 (MSLRLSSASRRSCPRPTTGSLRL) are compositionally biased toward low complexity. Residues 1–26 (MSLRLSSASRRSCPRPTTGSLRLSGG) form a disordered region. Residues 1-78 (MSLRLSSASR…VNERGLLSGN (78 aa)) form a head region. A coil 1A region spans residues 79-114 (EKVTMQNLNDRLASYLDSVHALEEANADLEQKIKGW). Residues 79–394 (EKVTMQNLND…LLIGGDDGAC (316 aa)) form the IF rod domain. The linker 1 stretch occupies residues 115–136 (YEKFGPGSCRGLDHDYSRYFPI). Residues 137-228 (IDDLKNQIIA…KNHKEEMQVL (92 aa)) are coil 1B. The linker 12 stretch occupies residues 229 to 251 (QCAAGGNVNVEMNAAPGVDLTVL). The segment at 252 to 390 (LNNMRAEYEA…ETYCLLIGGD (139 aa)) is coil 2. The interval 391 to 450 (DGACKSGGYKSKDYGSGNVGSQVKDSAKAIVVKKVLEEVDQRSKILTTRLRSLEEKSQSN) is tail. Ser442 bears the Phosphoserine mark.

It belongs to the intermediate filament family. In terms of assembly, heterodimer of a type I and a type II keratin. Heterodimer with type II keratin KRT5 leading to the formation of keratin intermediate filament (KIF) network. Interacts with KRT6A to form filaments.

It localises to the cytoplasm. In terms of biological role, essential for the proper assembly of type I and type II keratin protein complexes and formation of keratin intermediate filaments in the inner root sheath (irs). Plays a role in the cytoskeleton organization. The sequence is that of Keratin, type I cytoskeletal 25 (KRT25) from Pan troglodytes (Chimpanzee).